We begin with the raw amino-acid sequence, 155 residues long: Interleukin-2 (155 aa).

Positions 1–20 (MYKIQLLSCIALTLALVANG) are cleaved as a signal peptide. O-linked (GalNAc...) threonine glycosylation occurs at Thr-23. Cysteines 79 and 127 form a disulfide.

The protein belongs to the IL-2 family.

It localises to the secreted. Functionally, cytokine produced by activated CD4-positive helper T-cells and to a lesser extend activated CD8-positive T-cells and natural killer (NK) cells that plays pivotal roles in the immune response and tolerance. Binds to a receptor complex composed of either the high-affinity trimeric IL-2R (IL2RA/CD25, IL2RB/CD122 and IL2RG/CD132) or the low-affinity dimeric IL-2R (IL2RB and IL2RG). Interaction with the receptor leads to oligomerization and conformation changes in the IL-2R subunits resulting in downstream signaling starting with phosphorylation of JAK1 and JAK3. In turn, JAK1 and JAK3 phosphorylate the receptor to form a docking site leading to the phosphorylation of several substrates including STAT5. This process leads to activation of several pathways including STAT, phosphoinositide-3-kinase/PI3K and mitogen-activated protein kinase/MAPK pathways. Functions as a T-cell growth factor and can increase NK-cell cytolytic activity as well. Promotes strong proliferation of activated B-cells and subsequently immunoglobulin production. Plays a pivotal role in regulating the adaptive immune system by controlling the survival and proliferation of regulatory T-cells, which are required for the maintenance of immune tolerance. Moreover, participates in the differentiation and homeostasis of effector T-cell subsets, including Th1, Th2, Th17 as well as memory CD8-positive T-cells. The chain is Interleukin-2 (IL2) from Moschus berezovskii (Chinese forest musk deer).